The primary structure comprises 663 residues: Bifunctional polymyxin resistance protein ArnA (663 aa).

Residues 1 to 307 are formyltransferase ArnAFT; sequence MSPKAVVFAY…EFGLVEGSQL (307 aa). Catalysis depends on His106, which acts as the Proton donor; for formyltransferase activity. (6R)-10-formyltetrahydrofolate is bound by residues Arg116 and 138–142; that span reads VKRAD. Residues 317 to 663 form a dehydrogenase ArnADH region; that stretch reads RRTRVLILGV…EAMAEKADMR (347 aa). NAD(+) contacts are provided by residues Asp350 and 371–372; that span reads DI. UDP-alpha-D-glucuronate is bound by residues Ala396, Tyr401, and 435 to 436; that span reads TS. The active-site Proton acceptor; for decarboxylase activity is the Glu437. UDP-alpha-D-glucuronate-binding positions include Arg463, Asn494, 528–537, and Tyr615; that span reads RLVDGGAQKR. Arg621 acts as the Proton donor; for decarboxylase activity in catalysis.

In the N-terminal section; belongs to the Fmt family. UDP-L-Ara4N formyltransferase subfamily. The protein in the C-terminal section; belongs to the NAD(P)-dependent epimerase/dehydratase family. UDP-glucuronic acid decarboxylase subfamily. Homohexamer, formed by a dimer of trimers.

It carries out the reaction UDP-alpha-D-glucuronate + NAD(+) = UDP-beta-L-threo-pentopyranos-4-ulose + CO2 + NADH. The catalysed reaction is UDP-4-amino-4-deoxy-beta-L-arabinose + (6R)-10-formyltetrahydrofolate = UDP-4-deoxy-4-formamido-beta-L-arabinose + (6S)-5,6,7,8-tetrahydrofolate + H(+). It participates in nucleotide-sugar biosynthesis; UDP-4-deoxy-4-formamido-beta-L-arabinose biosynthesis; UDP-4-deoxy-4-formamido-beta-L-arabinose from UDP-alpha-D-glucuronate: step 1/3. It functions in the pathway nucleotide-sugar biosynthesis; UDP-4-deoxy-4-formamido-beta-L-arabinose biosynthesis; UDP-4-deoxy-4-formamido-beta-L-arabinose from UDP-alpha-D-glucuronate: step 3/3. The protein operates within bacterial outer membrane biogenesis; lipopolysaccharide biosynthesis. In terms of biological role, bifunctional enzyme that catalyzes the oxidative decarboxylation of UDP-glucuronic acid (UDP-GlcUA) to UDP-4-keto-arabinose (UDP-Ara4O) and the addition of a formyl group to UDP-4-amino-4-deoxy-L-arabinose (UDP-L-Ara4N) to form UDP-L-4-formamido-arabinose (UDP-L-Ara4FN). The modified arabinose is attached to lipid A and is required for resistance to polymyxin and cationic antimicrobial peptides. In Pseudomonas savastanoi pv. phaseolicola (strain 1448A / Race 6) (Pseudomonas syringae pv. phaseolicola (strain 1448A / Race 6)), this protein is Bifunctional polymyxin resistance protein ArnA.